Reading from the N-terminus, the 437-residue chain is MNYTTQMDAAKKGIVTKEMEIVAKKENMNVKDLMELVSKGKVAIPANKNHKSLDPEGIGQGLRTKINVNLGISKDCYNIDMELEKVQKAIDMKAEAIMDLSCFGKTEEFRKRLIDMSPAIIGTVPIYDAVGFYDKELKDITSEEFLKVAEKHAENGADFLTIHVGMNRKTAATFKKNPRRMNIVSRGGSLLYAWMELNNKENPFYEGFDKLLDICEKYDVTLSLGDACRPGCIEDSTDASQIEELIALGELTKRAWERNVQVIIEGPGHMTLDEIETNMKIEKKLCHGAPFYVLGPIVTDIAPGYDHITSAIGGAIAATHGADFLCYVTPAEHLRLPNLDDMKEGIIASKIAAHAADLAKGVKGARDWDNAMAKARRDLDWERMFELSIDEEKARRYREESKAKSKDSCTMCGKMCAVRNMNRVTEGKDLNMLRDDD.

Substrate is bound by residues Asn-69, Met-98, Tyr-127, His-163, 185 to 187 (SRG), 226 to 229 (DACR), and Glu-265. Residue His-269 coordinates Zn(2+). Tyr-292 serves as a coordination point for substrate. His-333 contributes to the Zn(2+) binding site. Residues Cys-409, Cys-412, and Cys-416 each contribute to the [4Fe-4S] cluster site.

It belongs to the ThiC family. It depends on [4Fe-4S] cluster as a cofactor.

The catalysed reaction is 5-amino-1-(5-phospho-beta-D-ribosyl)imidazole + S-adenosyl-L-methionine = 4-amino-2-methyl-5-(phosphooxymethyl)pyrimidine + CO + 5'-deoxyadenosine + formate + L-methionine + 3 H(+). The protein operates within cofactor biosynthesis; thiamine diphosphate biosynthesis. Catalyzes the synthesis of the hydroxymethylpyrimidine phosphate (HMP-P) moiety of thiamine from aminoimidazole ribotide (AIR) in a radical S-adenosyl-L-methionine (SAM)-dependent reaction. The sequence is that of Phosphomethylpyrimidine synthase from Clostridium botulinum (strain ATCC 19397 / Type A).